The sequence spans 353 residues: Paraneoplastic antigen Ma1 homolog (353 aa).

Belongs to the PNMA family. In terms of tissue distribution, testis and brain specific.

Its subcellular location is the nucleus. The protein localises to the nucleolus. The polypeptide is Paraneoplastic antigen Ma1 homolog (Pnma1) (Rattus norvegicus (Rat)).